The chain runs to 496 residues: E3 ubiquitin-protein ligase Hakai (496 aa).

Residues 35–60 (PNKIKPAPRPQRNMNRIPTKPQPGFD) form a disordered region. The RING-type; degenerate zinc-finger motif lies at 104–144 (CDKCGLPIKIYGRMIPCKHVFCYDCALMHEKKADKLCPGTL). The HYB domain stretch occupies residues 157–215 (CNDPVQRIEQCARGSLFMCSIVQGCKRTYLSQRDLQAHINHRHMRASKPTARPQPEPIH). Residues 173–199 (FMCSIVQGCKRTYLSQRDLQAHINHRH) form a C2H2-type zinc finger. Residues 304 to 314 (VPIQDDSNSGA) are compositionally biased toward polar residues. The interval 304–496 (VPIQDDSNSG…DQARYRPYYQ (193 aa)) is disordered. 3 stretches are compositionally biased toward pro residues: residues 350 to 360 (APPPPPPPPIS), 380 to 397 (GPPPPMTTAPPPITPPPG), and 407 to 430 (MNHPPPGPPPQHGGPPVNAPPPHH). Residues 434–449 (SSMPQFNEDQGTLSPP) show a composition bias toward polar residues. Residues 464 to 483 (PRGPPPRMQGPPSQAPMPGP) show a composition bias toward pro residues.

It belongs to the Hakai family. Homodimer. Interacts with tyrosine-phosphorylated SRC substrates. Component of the WMM complex, a N6-methyltransferase complex composed of a catalytic subcomplex, named MAC, and of an associated subcomplex, named MACOM. Component of the MACOM subcomplex.

It is found in the nucleus speckle. The protein localises to the nucleus. It localises to the nucleoplasm. The catalysed reaction is S-ubiquitinyl-[E2 ubiquitin-conjugating enzyme]-L-cysteine + [acceptor protein]-L-lysine = [E2 ubiquitin-conjugating enzyme]-L-cysteine + N(6)-ubiquitinyl-[acceptor protein]-L-lysine.. The protein operates within protein modification; protein ubiquitination. Its function is as follows. E3 ubiquitin-protein ligase that mediates ubiquitination of several tyrosine-phosphorylated Src substrates. Associated component of the WMM complex, a complex that mediates N6-methyladenosine (m6A) methylation of RNAs, a modification that plays a role in the efficiency of mRNA splicing and RNA processing. This Xenopus laevis (African clawed frog) protein is E3 ubiquitin-protein ligase Hakai.